We begin with the raw amino-acid sequence, 189 residues long: UPF0301 protein CCA_00630 (189 aa).

This sequence belongs to the UPF0301 (AlgH) family.

The protein is UPF0301 protein CCA_00630 of Chlamydia caviae (strain ATCC VR-813 / DSM 19441 / 03DC25 / GPIC) (Chlamydophila caviae).